The chain runs to 241 residues: Centromere protein H (241 aa).

Met-1 is modified (N-acetylmethionine). Positions 1-24 (MEEQPRERSEAGAEACEEKRGLSQ) are disordered. Positions 28-186 (ERIEDRISLL…KEDVDKMENS (159 aa)) form a coiled coil. Residue Lys-61 forms a Glycyl lysine isopeptide (Lys-Gly) (interchain with G-Cter in SUMO2) linkage. Thr-62 is subject to Phosphothreonine.

The protein belongs to the CENP-H/MCM16 family. Self-associates. Component of the CENPA-NAC complex, at least composed of CENPA, CENPC, CENPH, CENPM, CENPN, CENPT and CENPU. The CENPA-NAC complex interacts with the CENPA-CAD complex, composed of CENPI, CENPK, CENPL, CENPO, CENPP, CENPQ, CENPR and CENPS. Interacts directly with CENPK. Interacts with KIF2C and NDC80. Interacts with TRIM36. In terms of tissue distribution, abundantly expressed in thymus, spleen, uterus, ovary, testis and muscle, and weakly expressed in small intestine, lung and stomach. Barely detectable expression in kidney, liver, skin and prostate gland. Not detected in brain, heart or adrenal gland. Also expressed weakly in various hematopoietic cell lines.

It localises to the nucleus. It is found in the chromosome. The protein localises to the centromere. The protein resides in the kinetochore. Functionally, component of the CENPA-NAC (nucleosome-associated) complex, a complex that plays a central role in assembly of kinetochore proteins, mitotic progression and chromosome segregation. The CENPA-NAC complex recruits the CENPA-CAD (nucleosome distal) complex and may be involved in incorporation of newly synthesized CENPA into centromeres. Required for chromosome congression and efficiently align the chromosomes on a metaphase plate. The sequence is that of Centromere protein H from Mus musculus (Mouse).